The sequence spans 290 residues: Protein-lysine methyltransferase METTL21E (290 aa).

Residues Trp-96, Gly-124–Gly-126, Asp-145, Trp-176, and Ala-197 contribute to the S-adenosyl-L-methionine site.

The protein belongs to the methyltransferase superfamily. METTL21 family.

Its function is as follows. Protein-lysine methyltransferase. The sequence is that of Protein-lysine methyltransferase METTL21E (METTL21E) from Bos taurus (Bovine).